A 1468-amino-acid chain; its full sequence is Neuropathy target esterase sws (1468 aa).

The Lumenal segment spans residues 1 to 34 (MDVLEMLRASASGSYNTIFSDAWCQYVSKQITAT). The helical transmembrane segment at 35 to 55 (VYMYCALVMMSLLFIAWFLYF) threads the bilayer. Topologically, residues 56-1468 (KRMARLRLRD…RSSPNNETKN (1413 aa)) are cytoplasmic. Position 174–301 (174–301 (IFGHFEKPVF…IRVIQVIMIR (128 aa))) interacts with a nucleoside 3',5'-cyclic phosphate. 2 stretches are compositionally biased toward polar residues: residues 332–348 (TMSGPINSQTSQSSRQA) and 357–366 (NQLNLMQSAA). The segment at 332-411 (TMSGPINSQT…DGSFHGTTNL (80 aa)) is disordered. Phosphoserine occurs at positions 442 and 451. A nucleoside 3',5'-cyclic phosphate contacts are provided by residues 480-607 (ELGL…VVRR) and 596-723 (IVLD…LSHR). The 167-residue stretch at 950–1116 (LVLGGGGARG…VNNLPGHLWR (167 aa)) folds into the PNPLA domain. The short motif at 954–959 (GGGARG) is the GXGXXG element. Residues 981 to 985 (GVSIG) carry the GXSXG motif. Ser983 functions as the Nucleophile in the catalytic mechanism. The active-site Proton acceptor is the Asp1103. The short motif at 1103-1105 (DGG) is the DGA/G element. Position 1197 is a phosphoserine (Ser1197). Residues 1368-1468 (ERKMDKSTQS…RSSPNNETKN (101 aa)) form a disordered region. The span at 1374 to 1383 (STQSSPPTSS) shows a compositional bias: low complexity. Basic and acidic residues predominate over residues 1385-1395 (TDMRGKEEAKH). Residues 1419-1441 (TQTGQEQELQQQQKLQQLQQDQG) show a composition bias toward low complexity. The span at 1446–1459 (QLVDKDKEEDKENR) shows a compositional bias: basic and acidic residues.

This sequence belongs to the NTE family. As to quaternary structure, interacts with Pka-C3; interaction inhibits the catalytic function of Pka-C3 and the esterase activity of sws.

Its subcellular location is the endoplasmic reticulum membrane. It carries out the reaction a 1-acyl-sn-glycero-3-phosphocholine + H2O = sn-glycerol 3-phosphocholine + a fatty acid + H(+). Its function is as follows. Phospholipase B that deacylates intracellular phosphatidylcholine (PtdCho), generating glycerophosphocholine (GroPtdCho). This deacylation occurs at both sn-2 and sn-1 positions of PtdCho. Its specific chemical modification by certain organophosphorus (OP) compounds leads to distal axonopathy. Plays a role in the signaling mechanism between neurons and glia that regulates glia wrapping during development of the adult brain. Essential for membrane lipid homeostasis and cell survival in both neurons and glia of the adult brain. This Drosophila sechellia (Fruit fly) protein is Neuropathy target esterase sws.